Consider the following 428-residue polypeptide: ETS domain-containing protein Elk-1 (428 aa).

The ETS DNA-binding region spans 5-86 (VTLWQFLLQL…SGQKFVYKFV (82 aa)). Disordered regions lie at residues 121–149 (AAPGDTVSGKPGTPKGAGMAGPGGLARSS), 165–205 (QSLQ…SPLE), and 228–358 (NLKS…SLLP). A compositionally biased stretch (low complexity) spans 177–205 (PAVVLPSAAPAGAAAPPSGSRSTSPSPLE). Glycyl lysine isopeptide (Lys-Gly) (interchain with G-Cter in SUMO) cross-links involve residues Lys230, Lys249, and Lys254. A compositionally biased stretch (basic and acidic residues) spans 248 to 261 (VKVEGPKEELEVAG). Ser324 bears the Phosphoserine; by MAPK1 mark. Phosphothreonine; by MAPK1 occurs at positions 336, 353, 363, and 368. A sufficient for interaction with MAD2L2 region spans residues 349 to 399 (GPALTPSLLPTHTLTPVLLTPSSLPPSIHFWSTLSPIAPRSPAKLSFQFPS). O-linked (GlcNAc) threonine glycosylation is present at Thr381. Ser383 carries the phosphoserine; by MAPK1 and MAPK8 modification. At Ser389 the chain carries Phosphoserine; by MAPK1. Phosphothreonine; by MAPK1 is present on Thr417. The residue at position 422 (Ser422) is a Phosphoserine; by MAPK1.

The protein belongs to the ETS family. In terms of assembly, interacts in its sumoylated form with PIAS2/PIASX which enhances its transcriptional activator activity. Interacts with MAD2L2; the interaction is direct and promotes phosphorylation by the kinases MAPK8 and/or MAPK9. Interacts with POU1F1. Sumoylation represses transcriptional activator activity as it results in recruitment of HDAC2 to target gene promoters which leads to decreased histone acetylation and reduced transactivator activity. It also regulates nuclear retention. Post-translationally, on mitogenic stimulation, phosphorylated on C-terminal serine and threonine residues by MAPK1. Ser-383 and Ser-389 are the preferred sites for MAPK1. In vitro, phosphorylation by MAPK1 potentiates ternary complex formation with the serum responses factors, SRE and SRF. Also phosphorylated on Ser-383 by MAPK8 and/or MAKP9. Phosphorylation leads to loss of sumoylation and restores transcriptional activator activity. Phosphorylated and activated by CAMK4, MAPK11, MAPK12 and MAPK14. Upon bFGF stimulus, phosphorylated by PAK1. Phosphorylated by PRP4K at Thr-417; phosphorylation activation ELK1 transcriptional activity. As to expression, lung and testis.

It is found in the nucleus. Its function is as follows. Transcription factor that binds to purine-rich DNA sequences. Forms a ternary complex with SRF and the ETS and SRF motifs of the serum response element (SRE) on the promoter region of immediate early genes such as FOS and IER2. Induces target gene transcription upon JNK and MAPK-signaling pathways stimulation. The protein is ETS domain-containing protein Elk-1 of Homo sapiens (Human).